The sequence spans 345 residues: Ribonucleoside-diphosphate reductase small chain 2 (345 aa).

Methionine 1 bears the N-acetylmethionine mark. Tyrosine 131 is an active-site residue. Serine 169 and serine 332 each carry phosphoserine. At threonine 334 the chain carries Phosphothreonine. Serine 336 bears the Phosphoserine mark. Residue lysine 337 forms a Glycyl lysine isopeptide (Lys-Gly) (interchain with G-Cter in ubiquitin) linkage.

Belongs to the ribonucleoside diphosphate reductase small chain family. In terms of assembly, heterotetramer of two large (R1) and two small (R2) subunits. S.cerevisiae has two different R1 subunits (RNR1 and RNR3) and two different R2 subunits (RNR2 and RNR4). The functional form of the small subunits is a RNR2-RNR4 heterodimer, where RNR2 provides the iron-radical center and RNR4 is required for proper folding of RNR2 and assembly with the large subunits. Under normal growth conditions, the active form of the large subunits is a homodimer of the constitutively expressed RNR1. In damaged cells or cells arrested for DNA synthesis, the reductase consists of multiple species because of the association of the small subunits (RNR2-RNR4) with either the RNR1 homodimer or a heterodimer of RNR1 and the damage-inducible RNR3. Interacts with DIF1.

It is found in the nucleus. The catalysed reaction is a 2'-deoxyribonucleoside 5'-diphosphate + [thioredoxin]-disulfide + H2O = a ribonucleoside 5'-diphosphate + [thioredoxin]-dithiol. Functionally, provides the precursors necessary for DNA synthesis. Catalyzes the biosynthesis of deoxyribonucleotides from the corresponding ribonucleotides. RNR4 is required for proper folding of RNR2 and assembly with the large subunits. This is Ribonucleoside-diphosphate reductase small chain 2 (RNR4) from Saccharomyces cerevisiae (strain ATCC 204508 / S288c) (Baker's yeast).